Here is a 247-residue protein sequence, read N- to C-terminus: Uridylate kinase (247 aa).

14-17 contacts ATP; sequence KLSG. The involved in allosteric activation by GTP stretch occupies residues 22-27; it reads GERGVG. Position 56 (Gly-56) interacts with UMP. ATP-binding residues include Gly-57 and Arg-61. UMP-binding positions include Asp-76 and 137 to 144; that span reads IGSPYFST. Asn-165, Tyr-171, and Asp-174 together coordinate ATP.

This sequence belongs to the UMP kinase family. Homohexamer.

Its subcellular location is the cytoplasm. The catalysed reaction is UMP + ATP = UDP + ADP. It participates in pyrimidine metabolism; CTP biosynthesis via de novo pathway; UDP from UMP (UMPK route): step 1/1. With respect to regulation, allosterically activated by GTP. Inhibited by UTP, 5-bromo-UTP and 5-iodo-UTP. Functionally, catalyzes the reversible phosphorylation of UMP to UDP, with ATP as the most efficient phosphate donor. The protein is Uridylate kinase (pyrH) of Streptococcus pneumoniae serotype 4 (strain ATCC BAA-334 / TIGR4).